The primary structure comprises 149 residues: FAD synthase (149 aa).

ATP contacts are provided by residues 9 to 10 (TF), 14 to 17 (HPGH), N92, and Y119.

The protein belongs to the archaeal FAD synthase family. As to quaternary structure, homodimer. Requires a divalent metal cation as cofactor.

The catalysed reaction is FMN + ATP + H(+) = FAD + diphosphate. It functions in the pathway cofactor biosynthesis; FAD biosynthesis; FAD from FMN: step 1/1. Functionally, catalyzes the transfer of the AMP portion of ATP to flavin mononucleotide (FMN) to produce flavin adenine dinucleotide (FAD) coenzyme. This Methanoculleus marisnigri (strain ATCC 35101 / DSM 1498 / JR1) protein is FAD synthase.